The following is a 378-amino-acid chain: Putative glutamate--cysteine ligase 2 (378 aa).

The protein belongs to the glutamate--cysteine ligase type 2 family. YbdK subfamily.

It catalyses the reaction L-cysteine + L-glutamate + ATP = gamma-L-glutamyl-L-cysteine + ADP + phosphate + H(+). In terms of biological role, ATP-dependent carboxylate-amine ligase which exhibits weak glutamate--cysteine ligase activity. The polypeptide is Putative glutamate--cysteine ligase 2 (Salinispora arenicola (strain CNS-205)).